The sequence spans 104 residues: Large ribosomal subunit protein bL21 (104 aa).

This sequence belongs to the bacterial ribosomal protein bL21 family. Part of the 50S ribosomal subunit. Contacts protein L20.

This protein binds to 23S rRNA in the presence of protein L20. This Clostridium botulinum (strain 657 / Type Ba4) protein is Large ribosomal subunit protein bL21.